A 278-amino-acid chain; its full sequence is 4-deoxy-L-threo-5-hexosulose-uronate ketol-isomerase (278 aa).

The Zn(2+) site is built by His-196, His-198, Glu-203, and His-245.

This sequence belongs to the KduI family. Zn(2+) is required as a cofactor.

The enzyme catalyses 5-dehydro-4-deoxy-D-glucuronate = 3-deoxy-D-glycero-2,5-hexodiulosonate. It participates in glycan metabolism; pectin degradation; 2-dehydro-3-deoxy-D-gluconate from pectin: step 4/5. In terms of biological role, catalyzes the isomerization of 5-dehydro-4-deoxy-D-glucuronate to 3-deoxy-D-glycero-2,5-hexodiulosonate. The polypeptide is 4-deoxy-L-threo-5-hexosulose-uronate ketol-isomerase (Salmonella paratyphi A (strain ATCC 9150 / SARB42)).